A 331-amino-acid chain; its full sequence is 4-hydroxythreonine-4-phosphate dehydrogenase (331 aa).

Positions 136 and 137 each coordinate substrate. A divalent metal cation is bound by residues histidine 166, histidine 211, and histidine 266. Substrate-binding residues include lysine 274, asparagine 283, and arginine 292.

It belongs to the PdxA family. In terms of assembly, homodimer. The cofactor is Zn(2+). Requires Mg(2+) as cofactor. Co(2+) is required as a cofactor.

It is found in the cytoplasm. It catalyses the reaction 4-(phosphooxy)-L-threonine + NAD(+) = 3-amino-2-oxopropyl phosphate + CO2 + NADH. It functions in the pathway cofactor biosynthesis; pyridoxine 5'-phosphate biosynthesis; pyridoxine 5'-phosphate from D-erythrose 4-phosphate: step 4/5. In terms of biological role, catalyzes the NAD(P)-dependent oxidation of 4-(phosphooxy)-L-threonine (HTP) into 2-amino-3-oxo-4-(phosphooxy)butyric acid which spontaneously decarboxylates to form 3-amino-2-oxopropyl phosphate (AHAP). The sequence is that of 4-hydroxythreonine-4-phosphate dehydrogenase from Thioalkalivibrio sulfidiphilus (strain HL-EbGR7).